Reading from the N-terminus, the 251-residue chain is Probable transcriptional regulatory protein AAur_2300 (251 aa).

The protein belongs to the TACO1 family.

It localises to the cytoplasm. This chain is Probable transcriptional regulatory protein AAur_2300, found in Paenarthrobacter aurescens (strain TC1).